A 369-amino-acid chain; its full sequence is 2-aminoethylphosphonate--pyruvate transaminase 1 (369 aa).

Position 191 is an N6-(pyridoxal phosphate)lysine (Lys191).

It belongs to the class-V pyridoxal-phosphate-dependent aminotransferase family. PhnW subfamily. As to quaternary structure, homodimer. The cofactor is pyridoxal 5'-phosphate.

It catalyses the reaction (2-aminoethyl)phosphonate + pyruvate = phosphonoacetaldehyde + L-alanine. Involved in phosphonate degradation. The sequence is that of 2-aminoethylphosphonate--pyruvate transaminase 1 from Burkholderia lata (strain ATCC 17760 / DSM 23089 / LMG 22485 / NCIMB 9086 / R18194 / 383).